The chain runs to 150 residues: UPF0178 protein Sbal_1771 (150 aa).

It belongs to the UPF0178 family.

The polypeptide is UPF0178 protein Sbal_1771 (Shewanella baltica (strain OS155 / ATCC BAA-1091)).